The chain runs to 209 residues: Putative amino acid efflux protein YcgF (209 aa).

6 helical membrane passes run 1 to 21 (MNIF…VGPV), 39 to 59 (IFGL…YFGL), 62 to 82 (FLTA…VLTY), 110 to 130 (FASG…WLGI), 147 to 167 (LLIY…CMAI), and 184 to 204 (LTGI…YQGI).

The protein belongs to the Rht family.

The protein localises to the cell membrane. The sequence is that of Putative amino acid efflux protein YcgF (ycgF) from Bacillus subtilis (strain 168).